The following is a 408-amino-acid chain: tRNA-specific 2-thiouridylase MnmA (408 aa).

ATP-binding positions include 20–27 (AMSGGVDS) and Leu-46. Cys-114 functions as the Nucleophile in the catalytic mechanism. Cys-114 and Cys-210 are disulfide-bonded. Gly-138 serves as a coordination point for ATP. The interval 160–162 (RDQ) is interaction with tRNA. Catalysis depends on Cys-210, which acts as the Cysteine persulfide intermediate.

Belongs to the MnmA/TRMU family.

The protein resides in the cytoplasm. It carries out the reaction S-sulfanyl-L-cysteinyl-[protein] + uridine(34) in tRNA + AH2 + ATP = 2-thiouridine(34) in tRNA + L-cysteinyl-[protein] + A + AMP + diphosphate + H(+). Functionally, catalyzes the 2-thiolation of uridine at the wobble position (U34) of tRNA, leading to the formation of s(2)U34. This chain is tRNA-specific 2-thiouridylase MnmA, found in Bartonella quintana (strain Toulouse) (Rochalimaea quintana).